The chain runs to 673 residues: UvrABC system protein B (673 aa).

A Helicase ATP-binding domain is found at 26 to 183; the sequence is ANFEAGLAKQ…RHLTDLQYTR (158 aa). ATP is bound at residue 39–46; it reads GVTGSGKT. Residues 92–115 carry the Beta-hairpin motif; it reads YYDYYQPEAYVPSSDTFIEKDSSI. Residues 431-597 form the Helicase C-terminal domain; sequence QVDDLMSEIH…SVERPISDIM (167 aa). The tract at residues 601–631 is disordered; that stretch reads REDAAEKKSGKGRSKSRQVAEETPDYRAMKP. Basic and acidic residues predominate over residues 618–630; sequence QVAEETPDYRAMK. One can recognise a UVR domain in the interval 635-670; it reads AGKLKSLEQKMYQHAKDLEFEAAAQIRDQIQKLKTA.

Belongs to the UvrB family. In terms of assembly, forms a heterotetramer with UvrA during the search for lesions. Interacts with UvrC in an incision complex.

The protein localises to the cytoplasm. The UvrABC repair system catalyzes the recognition and processing of DNA lesions. A damage recognition complex composed of 2 UvrA and 2 UvrB subunits scans DNA for abnormalities. Upon binding of the UvrA(2)B(2) complex to a putative damaged site, the DNA wraps around one UvrB monomer. DNA wrap is dependent on ATP binding by UvrB and probably causes local melting of the DNA helix, facilitating insertion of UvrB beta-hairpin between the DNA strands. Then UvrB probes one DNA strand for the presence of a lesion. If a lesion is found the UvrA subunits dissociate and the UvrB-DNA preincision complex is formed. This complex is subsequently bound by UvrC and the second UvrB is released. If no lesion is found, the DNA wraps around the other UvrB subunit that will check the other stand for damage. This Xanthomonas oryzae pv. oryzae (strain MAFF 311018) protein is UvrABC system protein B.